We begin with the raw amino-acid sequence, 709 residues long: MLFELSIGAIIGFLTLYLLKRFNESKNFITPDNLKKIPIVEGAVPVLGHGPAFSKDIMQFMKNCYKKYGSVFQLKIFRTNMVVLCDRKLSEEFFKSRENDMSLYDVLNRLFFGLAFSDKPDSLEFIIKMVKKTITIRYDDFAPKIMDEAQRLTKIMRESHSGKKLDMIPEIIKFVSRTSARCFIAMDIDDEFYDALNKFTNLLNKIVVLTYFVPHWLLNATLNRFMLRKYRMRMTKLLENEIEKYRTDLNKSDSLLFRKCVDHIDPETGATLTNQDIGDIVVCLLYVSSENTSLLATNCLIDLTLNPKYWDLIKSECSAMIALGDYKNLFKAPLLNSIVMESARLNSHVFALARKPKTVNRIGDYFVADNVDTISLCEPALMKFEIASDVYANPNSYDPVRFMAPRNEPKDSGHVMNWGKGVHECPGKQFAIYEVKAAIAYIVTNFERFEFNHNDLKINYFSPSAMCEKNISVEFIPSQQNIHNIVYKDRTYIVEHIKCNETSAWLIYNALDRQQQREYYQYTYEISTDSQEHKLIEKAGPHKPFPIAYDKLVYTGQSNCMTPTKWYDFASDIWELLTENYAELGFPIYDDKIRNFVPNSFYGQLYSVESIMPTHRDQHVDYGLSISIGSNCEFVIEDKTILLPSGSVLIGDFSKISHSVSKIFHEKPDHLSDFEFFNRVRFSAQIRSIDPDVQPLMTTQEFLDMISEY.

Position 425 (Cys425) interacts with heme.

It belongs to the cytochrome P450 family. Heme serves as cofactor.

It is found in the membrane. It catalyses the reaction a 14alpha-methyl steroid + 3 reduced [NADPH--hemoprotein reductase] + 3 O2 = a Delta(14) steroid + formate + 3 oxidized [NADPH--hemoprotein reductase] + 4 H2O + 4 H(+). It participates in steroid biosynthesis; zymosterol biosynthesis; zymosterol from lanosterol: step 1/6. Its function is as follows. Catalyzes the 14-alpha demethylation of obtusifoliol to 4 alpha-methyl-5 alpha-ergosta-8,14,24(28)-trien-3 beta-ol. This Acanthamoeba polyphaga (Amoeba) protein is Probable lanosterol 14-alpha demethylase.